A 422-amino-acid polypeptide reads, in one-letter code: Putative serpin-Z8 (422 aa).

Positions 369–393 are RCL; the sequence is GTVAAAATMTRMLPSGVPPPPVDFV.

It belongs to the serpin family.

Probable serine protease inhibitor. The protein is Putative serpin-Z8 of Oryza sativa subsp. japonica (Rice).